A 212-amino-acid chain; its full sequence is Uridine kinase (212 aa).

Residue 13–20 (GGSGSGKT) coordinates ATP.

The protein belongs to the uridine kinase family.

It is found in the cytoplasm. It catalyses the reaction uridine + ATP = UMP + ADP + H(+). The enzyme catalyses cytidine + ATP = CMP + ADP + H(+). It functions in the pathway pyrimidine metabolism; CTP biosynthesis via salvage pathway; CTP from cytidine: step 1/3. The protein operates within pyrimidine metabolism; UMP biosynthesis via salvage pathway; UMP from uridine: step 1/1. The polypeptide is Uridine kinase (Bacillus mycoides (strain KBAB4) (Bacillus weihenstephanensis)).